A 141-amino-acid polypeptide reads, in one-letter code: Large ribosomal subunit protein uL11 (141 aa).

It belongs to the universal ribosomal protein uL11 family. Part of the ribosomal stalk of the 50S ribosomal subunit. Interacts with L10 and the large rRNA to form the base of the stalk. L10 forms an elongated spine to which L12 dimers bind in a sequential fashion forming a multimeric L10(L12)X complex. Post-translationally, one or more lysine residues are methylated.

Forms part of the ribosomal stalk which helps the ribosome interact with GTP-bound translation factors. This chain is Large ribosomal subunit protein uL11, found in Bacillus cereus (strain ATCC 10987 / NRS 248).